Reading from the N-terminus, the 95-residue chain is Large ribosomal subunit protein uL23c (95 aa).

It belongs to the universal ribosomal protein uL23 family. As to quaternary structure, part of the 50S ribosomal subunit.

It localises to the plastid. It is found in the chloroplast. Its function is as follows. Binds to 23S rRNA. The sequence is that of Large ribosomal subunit protein uL23c (rpl23) from Chlamydomonas reinhardtii (Chlamydomonas smithii).